A 617-amino-acid chain; its full sequence is Dihydroxy-acid dehydratase (617 aa).

Aspartate 81 is a binding site for Mg(2+). Residue cysteine 122 coordinates [2Fe-2S] cluster. Mg(2+)-binding residues include aspartate 123 and lysine 124. Position 124 is an N6-carboxylysine (lysine 124). Cysteine 195 contributes to the [2Fe-2S] cluster binding site. Glutamate 491 contributes to the Mg(2+) binding site. The Proton acceptor role is filled by serine 517.

Belongs to the IlvD/Edd family. Homodimer. [2Fe-2S] cluster is required as a cofactor. It depends on Mg(2+) as a cofactor.

It catalyses the reaction (2R)-2,3-dihydroxy-3-methylbutanoate = 3-methyl-2-oxobutanoate + H2O. It carries out the reaction (2R,3R)-2,3-dihydroxy-3-methylpentanoate = (S)-3-methyl-2-oxopentanoate + H2O. It functions in the pathway amino-acid biosynthesis; L-isoleucine biosynthesis; L-isoleucine from 2-oxobutanoate: step 3/4. The protein operates within amino-acid biosynthesis; L-valine biosynthesis; L-valine from pyruvate: step 3/4. Functions in the biosynthesis of branched-chain amino acids. Catalyzes the dehydration of (2R,3R)-2,3-dihydroxy-3-methylpentanoate (2,3-dihydroxy-3-methylvalerate) into 2-oxo-3-methylpentanoate (2-oxo-3-methylvalerate) and of (2R)-2,3-dihydroxy-3-methylbutanoate (2,3-dihydroxyisovalerate) into 2-oxo-3-methylbutanoate (2-oxoisovalerate), the penultimate precursor to L-isoleucine and L-valine, respectively. In Buchnera aphidicola subsp. Diuraphis noxia, this protein is Dihydroxy-acid dehydratase.